Reading from the N-terminus, the 68-residue chain is Medusin-AS (68 aa).

The signal sequence occupies residues 1 to 22 (MAFLKKSLFLVLFLGLVSLSVC). The propeptide occupies 23–49 (EEEKRESEEEKNEQEEDDRDERSEEKR). The disordered stretch occupies residues 24–46 (EEKRESEEEKNEQEEDDRDERSE). Residues 31-41 (EEKNEQEEDDR) show a composition bias toward acidic residues. Leucine 67 is subject to Leucine amide.

This sequence belongs to the frog skin active peptide (FSAP) family. Medusin subfamily. Expressed by the skin glands.

It is found in the secreted. Antimicrobial peptide active against Gram-positive bacteria and fungi but inactive against Gram-negative bacteria. Also inhibits growth of B.dendrobatidis zoospores at high concentrations. Shows anticancer activities. Shows hemolytic activity. This is Medusin-AS from Agalychnis spurrelli (Gliding leaf frog).